We begin with the raw amino-acid sequence, 118 residues long: Succinate dehydrogenase assembly factor 4, mitochondrial (118 aa).

The transit peptide at 1 to 30 (MQSVTRQTARVLPQMGKQVSYLSTSGAWRA) directs the protein to the mitochondrion. Residues 65-118 (GKLDEFSRHPYQEKEPLKPWPNQTNPYTGEIGGPAGPEPTRYGDWERKGRVSDF) are disordered. Basic and acidic residues-rich tracts occupy residues 66–81 (KLDE…KEPL) and 105–118 (RYGD…VSDF).

This sequence belongs to the SDHAF4 family. As to quaternary structure, interacts with SdhA in its FAD-bound form.

It localises to the mitochondrion matrix. Plays an essential role in the assembly of succinate dehydrogenase (SDH), an enzyme complex (also referred to as respiratory complex II) that is a component of both the tricarboxylic acid (TCA) cycle and the mitochondrial electron transport chain, and which couples the oxidation of succinate to fumarate with the reduction of ubiquinone (coenzyme Q) to ubiquinol. Binds to the flavoprotein subunit SdhA in its FAD-bound form, blocking the generation of excess reactive oxygen species (ROS) and facilitating its assembly with the iron-sulfur protein subunit SdhB into the SDH catalytic dimer. The chain is Succinate dehydrogenase assembly factor 4, mitochondrial from Drosophila melanogaster (Fruit fly).